The following is a 204-amino-acid chain: MASVNGPLRVGIGGPVGSGKTALMEQLCRRFRDSYEICAITNDIYTKEDARILTVAGALPEERILGVETGGCPHTAIREDASINLAAVAEMRRRFPKLDLVLIESGGDNLAATFSPELADLTLYVIDVAGGEKIPRKGGPGITRSDLLIVNKTDLAPLVGADLSVMEADTQRMRGTRPYVFASLREGHGADTVARFIVEAGGLG.

14–21 (GPVGSGKT) is a GTP binding site.

It belongs to the SIMIBI class G3E GTPase family. UreG subfamily. Homodimer. UreD, UreF and UreG form a complex that acts as a GTP-hydrolysis-dependent molecular chaperone, activating the urease apoprotein by helping to assemble the nickel containing metallocenter of UreC. The UreE protein probably delivers the nickel.

Its subcellular location is the cytoplasm. Facilitates the functional incorporation of the urease nickel metallocenter. This process requires GTP hydrolysis, probably effectuated by UreG. In Methylorubrum extorquens (strain PA1) (Methylobacterium extorquens), this protein is Urease accessory protein UreG 1.